We begin with the raw amino-acid sequence, 533 residues long: MKILLAVVFVLNLTNLAVPQHLITSSPSLPESKPVGRRPTYEEYKQQRESFLQTEDHHLLGANVTLTENEQLVNKFIMQMKLDEMEKGFNDSYNFIPARHIFEVLDRFGQSKVFNVIRRLPKGGVLHAHDMALGSTDLIVNATYLENLWQKGNFGLNHGPEFKFSRERPGKEWSLVSEIRQWMTNEVYDAKVAEVFSLYNADPLNAYKSLDNVWSKFQNLFACLAPLITFAPVWRQYYHDSLKQFYDDHVQYLEFRGVLPEVYDLDGKVYSAEEIVQLYYEETEQFKAKYPDFIGVKFIYAPGRYASDEEFQKLLDTTNRLHKKFPNFLAGFDLVGQEDPGRSLFEFAPALLKLPASINFFFHAGETNWYGMKTDQNLVDAVLLGTKRIGHGFAVLKHPKVLKEIKRRQICIEINPISNQVLKLVQDQRNHPAALLFSDNYPVVVSSDDPSFGRSTPLSHDFYVAFTGIASAKQDWRWLKQLALNSIEYSAMNSEEKTVAKEKWNQAWDHQFSRLAVDFVAGKILENWIMKIV.

The N-terminal stretch at 1–19 (MKILLAVVFVLNLTNLAVP) is a signal peptide.

It belongs to the metallo-dependent hydrolases superfamily. Adenosine and AMP deaminases family. ADGF subfamily. It depends on Zn(2+) as a cofactor. In terms of processing, proteolytically cleaved by human mast cell tryptase and chymase. Female salivary gland (at protein level).

Its subcellular location is the secreted. The catalysed reaction is adenosine + H2O + H(+) = inosine + NH4(+). The enzyme catalyses 2'-deoxyadenosine + H2O + H(+) = 2'-deoxyinosine + NH4(+). Catalyzes the deamination of adenosine to inosine and deoxyadenosine to deoxyinosine. Induces degranulation of host mast cells, and secretion of tryptase and IL6. Modulates enzymatic activities of human tryptase and chymase. Induces release of cytokines, such as IL1B, IL6, TNF, CCL2, IFN-beta (INFB1) and ISG15, from host monocytes and macrophages. Activates host NF-kappa-B signaling pathway in TAK1/MAP3K7-dependent manner. Its function is as follows. (Microbial infection) Promotes replication of dengue virus type 2 in host cells probably via modulation of cytokine production in host macrophages and monocytes. The protein is Adenosine deaminase of Aedes albopictus (Asian tiger mosquito).